Consider the following 189-residue polypeptide: Interferon alpha-16 (189 aa).

Residues 1-23 (MALSFSLLMAVLVLSYKSICSLG) form the signal peptide. Cystine bridges form between Cys-24/Cys-122 and Cys-52/Cys-162.

Belongs to the alpha/beta interferon family.

It is found in the secreted. Its function is as follows. Produced by macrophages, IFN-alpha have antiviral activities. Interferon stimulates the production of two enzymes: a protein kinase and an oligoadenylate synthetase. In Homo sapiens (Human), this protein is Interferon alpha-16 (IFNA16).